The sequence spans 132 residues: Small ribosomal subunit protein uS11 (132 aa).

Belongs to the universal ribosomal protein uS11 family. Part of the 30S ribosomal subunit. Interacts with proteins S7 and S18. Binds to IF-3.

Its function is as follows. Located on the platform of the 30S subunit, it bridges several disparate RNA helices of the 16S rRNA. Forms part of the Shine-Dalgarno cleft in the 70S ribosome. The sequence is that of Small ribosomal subunit protein uS11 from Legionella pneumophila (strain Corby).